The sequence spans 160 residues: Transcription elongation factor GreA (160 aa).

Positions 53–73 (AREEQGMVEARIRDIEGRLQN) form a coiled coil.

This sequence belongs to the GreA/GreB family.

Functionally, necessary for efficient RNA polymerase transcription elongation past template-encoded arresting sites. The arresting sites in DNA have the property of trapping a certain fraction of elongating RNA polymerases that pass through, resulting in locked ternary complexes. Cleavage of the nascent transcript by cleavage factors such as GreA or GreB allows the resumption of elongation from the new 3'terminus. GreA releases sequences of 2 to 3 nucleotides. The sequence is that of Transcription elongation factor GreA from Pseudomonas putida (strain ATCC 47054 / DSM 6125 / CFBP 8728 / NCIMB 11950 / KT2440).